Consider the following 314-residue polypeptide: tRNA dimethylallyltransferase (314 aa).

Residue 11–18 coordinates ATP; it reads GPTASGKT. Residue 13-18 participates in substrate binding; it reads TASGKT. Interaction with substrate tRNA stretches follow at residues 36–39, 160–164, 241–246, and 274–281; these read DSAL, QRINR, RCVGYR, and KRQITWLR.

The protein belongs to the IPP transferase family. Monomer. Mg(2+) serves as cofactor.

It catalyses the reaction adenosine(37) in tRNA + dimethylallyl diphosphate = N(6)-dimethylallyladenosine(37) in tRNA + diphosphate. In terms of biological role, catalyzes the transfer of a dimethylallyl group onto the adenine at position 37 in tRNAs that read codons beginning with uridine, leading to the formation of N6-(dimethylallyl)adenosine (i(6)A). The protein is tRNA dimethylallyltransferase of Glaesserella parasuis serovar 5 (strain SH0165) (Haemophilus parasuis).